Consider the following 222-residue polypeptide: UPF0128 protein PYRAB08320 (222 aa).

It belongs to the UPF0128 family.

The sequence is that of UPF0128 protein PYRAB08320 from Pyrococcus abyssi (strain GE5 / Orsay).